Here is a 242-residue protein sequence, read N- to C-terminus: Type III pantothenate kinase (242 aa).

Asp-7 to Lys-14 lines the ATP pocket. Substrate is bound by residues Tyr-91 and Gly-98–Arg-101. Residue Asp-100 is the Proton acceptor of the active site. Thr-121 is a binding site for ATP. Substrate is bound at residue Thr-171.

Belongs to the type III pantothenate kinase family. As to quaternary structure, homodimer. The cofactor is NH4(+). Requires K(+) as cofactor.

It localises to the cytoplasm. The enzyme catalyses (R)-pantothenate + ATP = (R)-4'-phosphopantothenate + ADP + H(+). It functions in the pathway cofactor biosynthesis; coenzyme A biosynthesis; CoA from (R)-pantothenate: step 1/5. Catalyzes the phosphorylation of pantothenate (Pan), the first step in CoA biosynthesis. The sequence is that of Type III pantothenate kinase from Xanthomonas euvesicatoria pv. vesicatoria (strain 85-10) (Xanthomonas campestris pv. vesicatoria).